A 366-amino-acid polypeptide reads, in one-letter code: GDSL esterase/lipase LTL1 (366 aa).

A signal peptide spans 1 to 27; the sequence is MNINCSPLGFLISLFFIVTFLAPQVKS. Residue Ser-36 is the Nucleophile of the active site. A glycan (N-linked (GlcNAc...) asparagine) is linked at Asn-117. Catalysis depends on residues Asp-326 and His-329. Asn-354 carries an N-linked (GlcNAc...) asparagine glycan.

The protein belongs to the 'GDSL' lipolytic enzyme family. In terms of assembly, binds to VLG at the endomembrane system. In terms of tissue distribution, mostly expressed in flowers, reproductive stems and rosette leaves, and, to a lower extent, in roots.

It is found in the secreted. Its function is as follows. Involved in the mechanisms of salt tolerance. Mediates resistance to LiCl and NaCl. This chain is GDSL esterase/lipase LTL1, found in Arabidopsis thaliana (Mouse-ear cress).